The chain runs to 180 residues: Large ribosomal subunit protein uL5 (180 aa).

It belongs to the universal ribosomal protein uL5 family. In terms of assembly, part of the 50S ribosomal subunit; part of the 5S rRNA/L5/L18/L25 subcomplex. Contacts the 5S rRNA and the P site tRNA. Forms a bridge to the 30S subunit in the 70S ribosome.

In terms of biological role, this is one of the proteins that bind and probably mediate the attachment of the 5S RNA into the large ribosomal subunit, where it forms part of the central protuberance. In the 70S ribosome it contacts protein S13 of the 30S subunit (bridge B1b), connecting the 2 subunits; this bridge is implicated in subunit movement. Contacts the P site tRNA; the 5S rRNA and some of its associated proteins might help stabilize positioning of ribosome-bound tRNAs. The sequence is that of Large ribosomal subunit protein uL5 from Streptococcus thermophilus (strain ATCC BAA-491 / LMD-9).